The primary structure comprises 1359 residues: Transcriptional regulator ATRX homolog (1359 aa).

Residues 1–402 (MRVGVSESED…RAEKERRKRL (402 aa)) form a disordered region. Over residues 11–49 (SDGHVIEDEDLEMARQIENERKEKRAQKLKEKREREGKP) the composition is skewed to basic and acidic residues. Over residues 50–61 (PPKKRPAKKRKA) the composition is skewed to basic residues. The segment covering 64-73 (SEEDDDDEEE) has biased composition (acidic residues). 6 stretches are compositionally biased toward basic residues: residues 77–86 (KSSKKSRKRA), 103–123 (KSKSKKKVDQKKKEKSKKKRT), 139–149 (KSKKKSKKTKK), 165–177 (VKKSKKNKEKSVK), 194–204 (KKSKKGLKKKA), and 219–229 (KKSKKKSKKVV). The segment covering 257 to 271 (ESSESEKSDEEEEEK) has biased composition (acidic residues). Positions 321 to 336 (KDQKSESEASDVEEKV) are enriched in basic and acidic residues. The segment covering 347–357 (SESGSDSSEGS) has biased composition (low complexity). A compositionally biased stretch (basic residues) spans 362 to 376 (RKSKKKEKPEKKKKG). Residues 383–397 (KLQKETIDAERAEKE) are compositionally biased toward basic and acidic residues. In terms of domain architecture, Helicase ATP-binding spans 483 to 685 (DRLDTEGSGG…HCMVNFVKPG (203 aa)). Residue 496 to 503 (HCMGLGKT) coordinates ATP. The DEAH box motif lies at 636–639 (DEAH). The tract at residues 809-891 (RVMREDAEEE…NSDDEDEEDG (83 aa)) is disordered. Acidic residues predominate over residues 814–832 (DAEEEADFIDDGDGSESES). The span at 833–847 (EGSFKSGSESDSGKS) shows a compositional bias: low complexity. Residues 951-1134 (LLVEIIKKCE…EAQIQRHYLG (184 aa)) form the Helicase C-terminal domain.

Belongs to the SNF2/RAD54 helicase family.

It localises to the nucleus. It catalyses the reaction ATP + H2O = ADP + phosphate + H(+). Its function is as follows. Required for embryonic development and gonadogenesis. Also, functions redundantly with the transcriptional repressor lin-35 to regulate somatic gonad development. The sequence is that of Transcriptional regulator ATRX homolog from Caenorhabditis elegans.